A 201-amino-acid chain; its full sequence is Akirin-2 (201 aa).

2 positions are modified to phosphoserine: Ser18 and Ser21. Residues 23-28 carry the Nuclear localization signal motif; it reads KRRRCA. Ser55 carries the post-translational modification Phosphoserine. An SYVS motif motif is present at residues 198 to 201; sequence SYVS.

It belongs to the akirin family. Homodimer. Interacts with IPO9; the interaction is direct. Associates with 20S and 26S proteasomes. Interacts with SMARCD1; promoting SWI/SNF complex recruitment. Interacts with NFKBIZ. Interacts with YWHAB. Post-translationally, polyubiquitinated. Polyubiquitination is dependent of UBR5 that extends pre-ubiquitinated AKIRIN2.

It localises to the nucleus. It is found in the cytoplasm. The protein resides in the membrane. Functionally, molecular adapter that acts as a bridge between a variety of multiprotein complexes, and which is involved in embryonic development, immunity, myogenesis and brain development. Plays a key role in nuclear protein degradation by promoting import of proteasomes into the nucleus: directly binds to fully assembled 20S proteasomes at one end and to nuclear import receptor IPO9 at the other end, bridging them together and mediating the import of pre-assembled proteasome complexes through the nuclear pore. Involved in innate immunity by regulating the production of interleukin-6 (IL6) downstream of Toll-like receptor (TLR): acts by bridging the NF-kappa-B inhibitor NFKBIZ and the SWI/SNF complex, leading to promote induction of IL6. Also involved in adaptive immunity by promoting B-cell activation. Involved in brain development: required for the survival and proliferation of cerebral cortical progenitor cells. Involved in myogenesis: required for skeletal muscle formation and skeletal development, possibly by regulating expression of muscle differentiation factors. Also plays a role in facilitating interdigital tissue regression during limb development. This Mus musculus (Mouse) protein is Akirin-2.